The sequence spans 224 residues: 7-cyano-7-deazaguanine synthase (224 aa).

Position 12 to 22 (12 to 22 (MSGGMDSTLGA)) interacts with ATP. C191, C199, C202, and C205 together coordinate Zn(2+).

This sequence belongs to the QueC family. Requires Zn(2+) as cofactor.

It carries out the reaction 7-carboxy-7-deazaguanine + NH4(+) + ATP = 7-cyano-7-deazaguanine + ADP + phosphate + H2O + H(+). The protein operates within purine metabolism; 7-cyano-7-deazaguanine biosynthesis. In terms of biological role, catalyzes the ATP-dependent conversion of 7-carboxy-7-deazaguanine (CDG) to 7-cyano-7-deazaguanine (preQ(0)). This chain is 7-cyano-7-deazaguanine synthase, found in Sulfurimonas denitrificans (strain ATCC 33889 / DSM 1251) (Thiomicrospira denitrificans (strain ATCC 33889 / DSM 1251)).